A 72-amino-acid polypeptide reads, in one-letter code: UPF0154 protein RBAM_017710 (72 aa).

Residues 4-24 (WVGILVGVVALLIGVALGFFI) traverse the membrane as a helical segment.

The protein belongs to the UPF0154 family.

Its subcellular location is the cell membrane. In Bacillus velezensis (strain DSM 23117 / BGSC 10A6 / LMG 26770 / FZB42) (Bacillus amyloliquefaciens subsp. plantarum), this protein is UPF0154 protein RBAM_017710.